The primary structure comprises 318 residues: Aspartate carbamoyltransferase catalytic subunit (318 aa).

Carbamoyl phosphate contacts are provided by arginine 64 and threonine 65. Lysine 92 provides a ligand contact to L-aspartate. The carbamoyl phosphate site is built by arginine 114, histidine 142, and glutamine 145. Positions 175 and 229 each coordinate L-aspartate. Glycine 270 and proline 271 together coordinate carbamoyl phosphate.

Belongs to the aspartate/ornithine carbamoyltransferase superfamily. ATCase family. In terms of assembly, heterododecamer (2C3:3R2) of six catalytic PyrB chains organized as two trimers (C3), and six regulatory PyrI chains organized as three dimers (R2).

It carries out the reaction carbamoyl phosphate + L-aspartate = N-carbamoyl-L-aspartate + phosphate + H(+). The protein operates within pyrimidine metabolism; UMP biosynthesis via de novo pathway; (S)-dihydroorotate from bicarbonate: step 2/3. Its function is as follows. Catalyzes the condensation of carbamoyl phosphate and aspartate to form carbamoyl aspartate and inorganic phosphate, the committed step in the de novo pyrimidine nucleotide biosynthesis pathway. The polypeptide is Aspartate carbamoyltransferase catalytic subunit (Rhodospirillum centenum (strain ATCC 51521 / SW)).